A 264-amino-acid chain; its full sequence is S-adenosylmethionine decarboxylase proenzyme (264 aa).

Catalysis depends on S113, which acts as the Schiff-base intermediate with substrate; via pyruvic acid. Pyruvic acid (Ser); by autocatalysis is present on S113. H118 (proton acceptor; for processing activity) is an active-site residue. The Proton donor; for catalytic activity role is filled by C141.

The protein belongs to the prokaryotic AdoMetDC family. Type 2 subfamily. In terms of assembly, heterooctamer of four alpha and four beta chains arranged as a tetramer of alpha/beta heterodimers. Pyruvate is required as a cofactor. In terms of processing, is synthesized initially as an inactive proenzyme. Formation of the active enzyme involves a self-maturation process in which the active site pyruvoyl group is generated from an internal serine residue via an autocatalytic post-translational modification. Two non-identical subunits are generated from the proenzyme in this reaction, and the pyruvate is formed at the N-terminus of the alpha chain, which is derived from the carboxyl end of the proenzyme. The post-translation cleavage follows an unusual pathway, termed non-hydrolytic serinolysis, in which the side chain hydroxyl group of the serine supplies its oxygen atom to form the C-terminus of the beta chain, while the remainder of the serine residue undergoes an oxidative deamination to produce ammonia and the pyruvoyl group blocking the N-terminus of the alpha chain.

It carries out the reaction S-adenosyl-L-methionine + H(+) = S-adenosyl 3-(methylsulfanyl)propylamine + CO2. Its pathway is amine and polyamine biosynthesis; S-adenosylmethioninamine biosynthesis; S-adenosylmethioninamine from S-adenosyl-L-methionine: step 1/1. Its function is as follows. Catalyzes the decarboxylation of S-adenosylmethionine to S-adenosylmethioninamine (dcAdoMet), the propylamine donor required for the synthesis of the polyamines spermine and spermidine from the diamine putrescine. This is S-adenosylmethionine decarboxylase proenzyme from Pseudomonas syringae pv. syringae (strain B728a).